Reading from the N-terminus, the 109-residue chain is Large ribosomal subunit protein uL24 (109 aa).

It belongs to the universal ribosomal protein uL24 family. Part of the 50S ribosomal subunit.

Its function is as follows. One of two assembly initiator proteins, it binds directly to the 5'-end of the 23S rRNA, where it nucleates assembly of the 50S subunit. One of the proteins that surrounds the polypeptide exit tunnel on the outside of the subunit. This Mesoplasma florum (strain ATCC 33453 / NBRC 100688 / NCTC 11704 / L1) (Acholeplasma florum) protein is Large ribosomal subunit protein uL24.